A 148-amino-acid polypeptide reads, in one-letter code: Ribonuclease H (148 aa).

The 142-residue stretch at 1–142 (MSDSVEIYTD…ADQLANRGVD (142 aa)) folds into the RNase H type-1 domain. Mg(2+)-binding residues include aspartate 10, glutamate 48, aspartate 70, and aspartate 134. Residues 129–148 (GNERADQLANRGVDEVRAQR) are disordered.

It belongs to the RNase H family. Monomer. The cofactor is Mg(2+).

The protein localises to the cytoplasm. It catalyses the reaction Endonucleolytic cleavage to 5'-phosphomonoester.. In terms of biological role, endonuclease that specifically degrades the RNA of RNA-DNA hybrids. This is Ribonuclease H from Pseudomonas entomophila (strain L48).